The following is a 217-amino-acid chain: Adenylate kinase (217 aa).

10–15 is an ATP binding site; the sequence is GAGKGT. The tract at residues 30-59 is NMP; the sequence is STGDMLRAAVKAGTPLGLEAKKVMDSGGLV. Residues Thr31, Arg36, 57 to 59, 85 to 88, and Gln92 each bind AMP; these read GLV and GFPR. The LID stretch occupies residues 122-159; the sequence is GRRVHVASGRTYHVKFNPPKVAGVDDVTGEPLIQRDDD. ATP contacts are provided by residues Arg123 and 132–133; that span reads TY. AMP is bound by residues Arg156 and Arg167. Gly203 serves as a coordination point for ATP.

It belongs to the adenylate kinase family. Monomer.

It localises to the cytoplasm. It catalyses the reaction AMP + ATP = 2 ADP. It participates in purine metabolism; AMP biosynthesis via salvage pathway; AMP from ADP: step 1/1. Functionally, catalyzes the reversible transfer of the terminal phosphate group between ATP and AMP. Plays an important role in cellular energy homeostasis and in adenine nucleotide metabolism. The protein is Adenylate kinase of Methylibium petroleiphilum (strain ATCC BAA-1232 / LMG 22953 / PM1).